A 438-amino-acid chain; its full sequence is Keratin, type I cytoskeletal 18 (438 aa).

The segment at 4–83 (AVSSRSTVVS…TLSGNAVISN (80 aa)) is head. The segment at 84-119 (EKETMQDLNDRLSNYLETVRRLENANQQLEIQIREA) is coil 1A. Residues 84 to 395 (EKETMQDLND…HLLGGEDSDT (312 aa)) enclose the IF rod domain. The linker 1 stretch occupies residues 120–136 (MEKRGPSVRDYSNYEKI). The tract at residues 137–228 (IKELRDQIYD…KNHEDEVIAL (92 aa)) is coil 1B. Residues 229 to 252 (RNQVNSCGVQVDLDAPKGTDLAEI) are linker 12. Positions 253–393 (MATLRAEYEA…YRHLLGGEDS (141 aa)) are coil 2. Positions 394-438 (DTLSLQDALSAMKVSNVQTVQKIVVTTQKLVDGKVVEDSTVTETK) are tail.

The protein belongs to the intermediate filament family. As to quaternary structure, heterotetramer of two type I and two type II keratins. Keratin-18 associates with keratin-8. In terms of processing, phosphorylated. Post-translationally, proteolytically cleaved by caspases during epithelial cell apoptosis. In terms of tissue distribution, expressed at low levels in skin.

When phosphorylated, plays a role in filament reorganization. This chain is Keratin, type I cytoskeletal 18, found in Protopterus aethiopicus (Marbled lungfish).